The chain runs to 284 residues: Parvulin-like PPIase (284 aa).

Positions M1 to A20 are cleaved as a signal peptide. Residues K139–E232 form the PpiC domain.

The protein belongs to the PpiC/parvulin rotamase family.

It localises to the cell outer membrane. It catalyses the reaction [protein]-peptidylproline (omega=180) = [protein]-peptidylproline (omega=0). The chain is Parvulin-like PPIase (plp) from Rickettsia bellii (strain RML369-C).